The sequence spans 200 residues: Endochitinase (200 aa).

The active-site Proton donor is E58.

Belongs to the glycosyl hydrolase 19 family. Chitinase class I subfamily.

The enzyme catalyses Random endo-hydrolysis of N-acetyl-beta-D-glucosaminide (1-&gt;4)-beta-linkages in chitin and chitodextrins.. Its function is as follows. This protein functions as a defense against chitin-containing fungal pathogens. The protein is Endochitinase of Avena sativa (Oat).